We begin with the raw amino-acid sequence, 381 residues long: Cytochrome b (381 aa).

The next 4 membrane-spanning stretches (helical) occupy residues 36 to 56, 80 to 101, 116 to 136, and 181 to 201; these read FGSL…FLTM, WLIR…YIHI, WMVG…GYVL, and FYTF…IHLL. The heme b site is built by H86 and H100. 2 residues coordinate heme b: H185 and H199. Residue H204 participates in a ubiquinone binding. Helical transmembrane passes span 229 to 249, 291 to 311, 323 to 343, and 350 to 370; these read FKDM…TLTN, LGGV…PLTF, MNQI…WIGA, and YVFV…INPM.

The protein belongs to the cytochrome b family. As to quaternary structure, the main subunits of complex b-c1 are: cytochrome b, cytochrome c1 and the Rieske protein. Heme b is required as a cofactor.

The protein localises to the mitochondrion inner membrane. Its function is as follows. Component of the ubiquinol-cytochrome c reductase complex (complex III or cytochrome b-c1 complex) that is part of the mitochondrial respiratory chain. The b-c1 complex mediates electron transfer from ubiquinol to cytochrome c. Contributes to the generation of a proton gradient across the mitochondrial membrane that is then used for ATP synthesis. The chain is Cytochrome b (MT-CYB) from Ostrinia nubilalis (European corn borer).